A 1345-amino-acid chain; its full sequence is Rho guanine nucleotide exchange factor 10 (1345 aa).

Disordered stretches follow at residues 1–84 (MEQG…PAKL) and 99–120 (TPLQ…GVGL). Over residues 22 to 39 (NNEEEGELFDFDSGDEVP) the composition is skewed to acidic residues. Residues 40 to 54 (EADRQVPSADDRTRG) are compositionally biased toward basic and acidic residues. Residues 102–111 (QEDQPSSPDA) show a composition bias toward polar residues. S157 carries the post-translational modification Phosphoserine. Disordered stretches follow at residues 158–195 (VEEE…SALA) and 207–273 (MENP…IPRS). Polar residues predominate over residues 171–191 (QCNSLSSEDLPHSSEQGSQEG). Acidic residues predominate over residues 224–239 (DSEPDEMIYDDVENGE). The segment covering 242-255 (GNSSPEYGWSSSEF) has biased composition (low complexity). Residues 307–335 (GAMEIQQAKQRQERKMQKLMKAAKEGTKD) adopt a coiled-coil conformation. S355 is modified (phosphoserine). Positions 397–584 (VRRYILGSIV…ETLAEKLNER (188 aa)) constitute a DH domain. 2 disordered regions span residues 1202-1237 (DRAR…QPDT) and 1253-1306 (KNDL…RASS). The segment covering 1256-1271 (LSSSSGSLNLSHGSSS) has biased composition (low complexity). Phosphoserine is present on S1262. Position 1314 is an N5-methylglutamine (Q1314).

Methylated at Gln-1314 by N6AMT1. In terms of tissue distribution, ubiquitously expressed.

Functionally, may play a role in developmental myelination of peripheral nerves. In Mus musculus (Mouse), this protein is Rho guanine nucleotide exchange factor 10 (Arhgef10).